A 163-amino-acid polypeptide reads, in one-letter code: SKP1-like protein 3 (163 aa).

The interval 105–163 is interaction with the F-box domain of F-box proteins; that stretch reads LRAANYLNISGLLDLTCKAVADQMRGKTPAQMREHFNIKNDYTPEEEAEVRNENRWAFE.

This sequence belongs to the SKP1 family. Part of a SCF (SKP1-cullin-F-box) protein ligase complex. Interacts with ADO3/FKF1 and At3g61590. In terms of tissue distribution, highly expressed in siliques.

It is found in the nucleus. It functions in the pathway protein modification; protein ubiquitination. In terms of biological role, involved in ubiquitination and subsequent proteasomal degradation of target proteins. Together with CUL1, RBX1 and a F-box protein, it forms a SCF E3 ubiquitin ligase complex. The functional specificity of this complex depends on the type of F-box protein. In the SCF complex, it serves as an adapter that links the F-box protein to CUL1. The chain is SKP1-like protein 3 (ASK3) from Arabidopsis thaliana (Mouse-ear cress).